A 414-amino-acid chain; its full sequence is Esterase FrsA (414 aa).

It belongs to the FrsA family.

The catalysed reaction is a carboxylic ester + H2O = an alcohol + a carboxylate + H(+). Its function is as follows. Catalyzes the hydrolysis of esters. This is Esterase FrsA from Escherichia coli (strain K12 / DH10B).